The sequence spans 474 residues: tRNA-2-methylthio-N(6)-dimethylallyladenosine synthase (474 aa).

The region spanning 3–120 (KKLHIKTWGC…LPEMIEQIQR (118 aa)) is the MTTase N-terminal domain. [4Fe-4S] cluster is bound by residues C12, C49, C83, C157, C161, and C164. The region spanning 143 to 375 (RADGPTAFVS…QDRITQQAMR (233 aa)) is the Radical SAM core domain. The region spanning 378–441 (RQMLGTVQRI…TNSLRGEFVR (64 aa)) is the TRAM domain.

Belongs to the methylthiotransferase family. MiaB subfamily. As to quaternary structure, monomer. Requires [4Fe-4S] cluster as cofactor.

Its subcellular location is the cytoplasm. The catalysed reaction is N(6)-dimethylallyladenosine(37) in tRNA + (sulfur carrier)-SH + AH2 + 2 S-adenosyl-L-methionine = 2-methylsulfanyl-N(6)-dimethylallyladenosine(37) in tRNA + (sulfur carrier)-H + 5'-deoxyadenosine + L-methionine + A + S-adenosyl-L-homocysteine + 2 H(+). In terms of biological role, catalyzes the methylthiolation of N6-(dimethylallyl)adenosine (i(6)A), leading to the formation of 2-methylthio-N6-(dimethylallyl)adenosine (ms(2)i(6)A) at position 37 in tRNAs that read codons beginning with uridine. This is tRNA-2-methylthio-N(6)-dimethylallyladenosine synthase from Shewanella frigidimarina (strain NCIMB 400).